Consider the following 1413-residue polypeptide: DNA-directed RNA polymerase subunit beta' (1413 aa).

The Zn(2+) site is built by Cys-70, Cys-72, Cys-85, and Cys-88. Residues Asp-460, Asp-462, and Asp-464 each contribute to the Mg(2+) site. 4 residues coordinate Zn(2+): Cys-819, Cys-893, Cys-900, and Cys-903.

It belongs to the RNA polymerase beta' chain family. The RNAP catalytic core consists of 2 alpha, 1 beta, 1 beta' and 1 omega subunit. When a sigma factor is associated with the core the holoenzyme is formed, which can initiate transcription. Requires Mg(2+) as cofactor. The cofactor is Zn(2+).

It catalyses the reaction RNA(n) + a ribonucleoside 5'-triphosphate = RNA(n+1) + diphosphate. DNA-dependent RNA polymerase catalyzes the transcription of DNA into RNA using the four ribonucleoside triphosphates as substrates. The polypeptide is DNA-directed RNA polymerase subunit beta' (Burkholderia ambifaria (strain MC40-6)).